Here is a 247-residue protein sequence, read N- to C-terminus: PF03932 family protein CutC (247 aa).

Over residues Lys205 to Ser222 the composition is skewed to polar residues. Positions Lys205–Asp226 are disordered.

The protein belongs to the CutC family.

It localises to the cytoplasm. This is PF03932 family protein CutC from Vibrio atlanticus (strain LGP32) (Vibrio splendidus (strain Mel32)).